Reading from the N-terminus, the 158-residue chain is Kalata-B3/B6 (158 aa).

A signal peptide spans 1 to 22 (MAKFTKSLVLCLLLAAFVGAFG). Positions 23–66 (AELSEADKANVVNEIAANIQREILKGVKSSETTLTMFLKEMQLK) are excised as a propeptide. Positions 67 to 96 (GLPTCGETCFGGTCNTPGCSCSSWPICTRN) form a cross-link, cyclopeptide (Gly-Asn). 3 disulfides stabilise this stretch: cysteine 71–cysteine 85, cysteine 75–cysteine 87, and cysteine 80–cysteine 93. A propeptide spanning residues 97 to 121 (GLPKRAGVKSSETTLTMFLKEMQLK) is cleaved from the precursor. A cross-link (cyclopeptide (Gly-Asp)) is located at residues 122–151 (GLPTCGETCFGGTCNTPGCTCDPWPICTRD). 3 disulfide bridges follow: cysteine 126/cysteine 140, cysteine 130/cysteine 142, and cysteine 135/cysteine 148. A propeptide spanning residues 152–158 (GLPSAAA) is cleaved from the precursor.

The protein belongs to the cyclotide family. Moebius subfamily. Post-translationally, kalata-B3 and kalata-B6 are cyclic peptides.

In terms of biological role, probably participates in a plant defense mechanism. Has hemolytic activity. This is Kalata-B3/B6 (OAK2) from Oldenlandia affinis.